The primary structure comprises 104 residues: Gastrin (104 aa).

The first 21 residues, 1 to 21 (MQRLCAYVLIHVLALAACSEA), serve as a signal peptide directing secretion. Positions 22–58 (SWKPGFQLQDASSGPGANRGKEPHELDRLGPASHHRR) are excised as a propeptide. The tract at residues 27-67 (FQLQDASSGPGANRGKEPHELDRLGPASHHRRQLGLQGPPH) is disordered. Basic and acidic residues predominate over residues 40–49 (RGKEPHELDR). A Pyrrolidone carboxylic acid; in form big gastrin modification is found at Q59. Pyrrolidone carboxylic acid; in form gastrin is present on Q76. Y87 bears the Sulfotyrosine; partial mark. F92 is modified (phenylalanine amide). S96 carries the phosphoserine modification. Residues 96-104 (SAEEGDQRP) constitute a propeptide that is removed on maturation.

This sequence belongs to the gastrin/cholecystokinin family. Sulfation enhances proteolytic processing, and blocks peptide degradation. Levels of sulfation differ between proteolytically-cleaved gastrins. Thus, gastrin-6 is almost 73% sulfated, whereas the larger gastrins are less than 50% sulfated. Sulfation levels are also tissue-specific.

The protein localises to the secreted. Its function is as follows. Gastrin stimulates the stomach mucosa to produce and secrete hydrochloric acid and the pancreas to secrete its digestive enzymes. It also stimulates smooth muscle contraction and increases blood circulation and water secretion in the stomach and intestine. In Sus scrofa (Pig), this protein is Gastrin (GAST).